Here is a 643-residue protein sequence, read N- to C-terminus: Translation factor GUF1, mitochondrial (643 aa).

Residues 1–18 (MLASQAIKRIFHRSWKPL) constitute a mitochondrion transit peptide. In terms of domain architecture, tr-type G spans 43–226 (ENYRNFSIVA…AIIDRIPPPT (184 aa)). GTP is bound by residues 52–59 (AHIDHGKS), 118–122 (DTPGH), and 172–175 (NKID).

Belongs to the TRAFAC class translation factor GTPase superfamily. Classic translation factor GTPase family. LepA subfamily.

It localises to the mitochondrion inner membrane. It catalyses the reaction GTP + H2O = GDP + phosphate + H(+). In terms of biological role, promotes mitochondrial protein synthesis. May act as a fidelity factor of the translation reaction, by catalyzing a one-codon backward translocation of tRNAs on improperly translocated ribosomes. Binds to mitochondrial ribosomes in a GTP-dependent manner. The protein is Translation factor GUF1, mitochondrial of Zygosaccharomyces rouxii (strain ATCC 2623 / CBS 732 / NBRC 1130 / NCYC 568 / NRRL Y-229).